Here is a 493-residue protein sequence, read N- to C-terminus: Acetylcholine receptor subunit beta-type unc-29 (493 aa).

The first 26 residues, 1-26 (MRTNRLSWILVLSVVIFLVIINTINA), serve as a signal peptide directing secretion. Asparagine 25 and asparagine 50 each carry an N-linked (GlcNAc...) asparagine glycan. Over 27 to 232 (SDDEERLMVD…QVRIRRKTLF (206 aa)) the chain is Extracellular. Cysteines 155 and 169 form a disulfide. Transmembrane regions (helical) follow at residues 233 to 254 (YTVV…VFFL), 262 to 280 (ITLT…LLVS), and 296 to 317 (YLLL…IINV). The Cytoplasmic portion of the chain corresponds to 318 to 445 (YFRGPRTHRM…WKYVAMIIDR (128 aa)). A helical membrane pass occupies residues 446 to 466 (LLLYVFFGITVGGTCGILFSA).

The protein belongs to the ligand-gated ion channel (TC 1.A.9) family. Acetylcholine receptor (TC 1.A.9.1) subfamily. In terms of assembly, interacts with lev-1. Component of nicotinic acetylcholine receptor composed of 2 non-alpha subunits lev-1 and unc-29, and 3 alpha subunits unc-38, unc-63 and lev-8. Interacts with oig-4. Interacts with crld-1.

The protein localises to the postsynaptic cell membrane. The protein resides in the cell membrane. Functionally, non-alpha subunit of nicotinic acetylcholine receptor (nAChR). Involved in nAChR sensitivity to nicotine and levasimole. The protein is Acetylcholine receptor subunit beta-type unc-29 of Caenorhabditis elegans.